Consider the following 354-residue polypeptide: Guanine nucleotide-binding protein G(i) subunit alpha (354 aa).

Gly-2 carries N-myristoyl glycine lipidation. Residue Cys-3 is the site of S-palmitoyl cysteine attachment. In terms of domain architecture, G-alpha spans 32–354; it reads REVKLLLLGA…KNNLKDCGLF (323 aa). The G1 motif stretch occupies residues 35-48; it reads KLLLLGAGESGKST. GTP contacts are provided by residues 40-47, 175-181, 200-204, 269-272, and Ala-326; these read GAGESGKS, LRTRVKT, DVGGQ, and NKKD. Mg(2+) contacts are provided by Ser-47 and Thr-181. The interval 173-181 is G2 motif; sequence DVLRTRVKT. A G3 motif region spans residues 196-205; the sequence is FKMFDVGGQR. Positions 265 to 272 are G4 motif; it reads ILFLNKKD. A G5 motif region spans residues 324 to 329; the sequence is TCATDT.

The protein belongs to the G-alpha family. G(i/o/t/z) subfamily. In terms of assembly, g proteins are composed of 3 units; alpha, beta and gamma. The alpha chain contains the guanine nucleotide binding site.

In terms of biological role, guanine nucleotide-binding proteins (G proteins) are involved as modulators or transducers in various transmembrane signaling systems. In Planorbella trivolvis (Marsh rams-horn), this protein is Guanine nucleotide-binding protein G(i) subunit alpha.